We begin with the raw amino-acid sequence, 644 residues long: Macrolide export ATP-binding/permease protein MacB (644 aa).

Residues Leu-6–Gly-244 enclose the ABC transporter domain. Gly-42 to Ser-49 is a binding site for ATP. Transmembrane regions (helical) follow at residues Ala-271–Gly-291, Glu-415–Ala-435, Leu-517–Met-537, Leu-574–Phe-594, and Val-609–Ala-629.

Belongs to the ABC transporter superfamily. Macrolide exporter (TC 3.A.1.122) family. As to quaternary structure, homodimer.

The protein localises to the cell inner membrane. Functionally, non-canonical ABC transporter that contains transmembrane domains (TMD), which form a pore in the inner membrane, and an ATP-binding domain (NBD), which is responsible for energy generation. Confers resistance against macrolides. The sequence is that of Macrolide export ATP-binding/permease protein MacB from Chromobacterium violaceum (strain ATCC 12472 / DSM 30191 / JCM 1249 / CCUG 213 / NBRC 12614 / NCIMB 9131 / NCTC 9757 / MK).